A 521-amino-acid polypeptide reads, in one-letter code: UDP-N-acetylmuramate--L-alanine ligase (521 aa).

An ATP-binding site is contributed by Gly136–Thr142.

It belongs to the MurCDEF family.

It localises to the cytoplasm. It carries out the reaction UDP-N-acetyl-alpha-D-muramate + L-alanine + ATP = UDP-N-acetyl-alpha-D-muramoyl-L-alanine + ADP + phosphate + H(+). The protein operates within cell wall biogenesis; peptidoglycan biosynthesis. Its function is as follows. Cell wall formation. The sequence is that of UDP-N-acetylmuramate--L-alanine ligase from Bifidobacterium adolescentis (strain ATCC 15703 / DSM 20083 / NCTC 11814 / E194a).